The chain runs to 95 residues: Small ribosomal subunit protein bS18 (95 aa).

It belongs to the bacterial ribosomal protein bS18 family. Part of the 30S ribosomal subunit. Forms a tight heterodimer with protein bS6.

Its function is as follows. Binds as a heterodimer with protein bS6 to the central domain of the 16S rRNA, where it helps stabilize the platform of the 30S subunit. In Rickettsia prowazekii (strain Madrid E), this protein is Small ribosomal subunit protein bS18.